Consider the following 595-residue polypeptide: Outer dynein arm-docking complex subunit 3 (595 aa).

The segment at 1–69 (MTSPLCRAAS…RGAGKPSVHS (69 aa)) is disordered. Coiled-coil stretches lie at residues 94 to 327 (WNIK…REHL) and 385 to 473 (FAQL…ASKL).

In terms of assembly, component of the outer dynein arm-docking complex along with ODAD1, ODAD2, ODAD4 and CLXN. Interacts with ODAD1. Interacts with PIERCE1 and PIERCE2; the interactions link the outer dynein arms docking complex (ODA-DC) to the internal microtubule inner proteins (MIP) in cilium axoneme.

It is found in the cytoplasm. Its subcellular location is the cytoskeleton. The protein resides in the cilium basal body. It localises to the microtubule organizing center. The protein localises to the centrosome. It is found in the centriole. Its subcellular location is the cilium axoneme. Functionally, component of the outer dynein arm-docking complex (ODA-DC) that mediates outer dynein arms (ODA) binding onto the doublet microtubule. Involved in mediating assembly of both ODAs and their axonemal docking complex onto ciliary microtubules. This Homo sapiens (Human) protein is Outer dynein arm-docking complex subunit 3.